Consider the following 256-residue polypeptide: NAD-dependent protein deacylase 2 (256 aa).

The Deacetylase sirtuin-type domain maps to 1 to 256; the sequence is MDSHSPIATV…MPQVVSHIYR (256 aa). NAD(+) is bound by residues 25-44 and 108-111; these read GAGL…GGLY and QNID. His-128 functions as the Proton acceptor in the catalytic mechanism. Zn(2+)-binding residues include Cys-136, Cys-139, Cys-158, and Cys-161. Residues 199–201, 225–227, and Ala-243 each bind NAD(+); these read GTT and NPG.

The protein belongs to the sirtuin family. Class III subfamily. It depends on Zn(2+) as a cofactor.

The protein resides in the cytoplasm. It carries out the reaction N(6)-acetyl-L-lysyl-[protein] + NAD(+) + H2O = 2''-O-acetyl-ADP-D-ribose + nicotinamide + L-lysyl-[protein]. In terms of biological role, NAD-dependent protein deacetylase which modulates the activities of several proteins which are inactive in their acetylated form. The chain is NAD-dependent protein deacylase 2 (cobB2) from Pseudomonas aeruginosa (strain ATCC 15692 / DSM 22644 / CIP 104116 / JCM 14847 / LMG 12228 / 1C / PRS 101 / PAO1).